Here is a 481-residue protein sequence, read N- to C-terminus: UDP-glycosyltransferase 72E2 (481 aa).

The active-site Proton acceptor is the His18. Residue His18 participates in an anthocyanidin binding. Residue Asp111 is the Charge relay of the active site. Positions 346, 348, 363, 366, 368, and 371 each coordinate UDP-alpha-D-glucose. Ala386 is an an anthocyanidin binding site. The UDP-alpha-D-glucose site is built by Glu387 and Gln388.

Belongs to the UDP-glycosyltransferase family. In terms of tissue distribution, expressed in seedlings and roots.

The catalysed reaction is (E)-4-coumarate + UDP-alpha-D-glucose = 4-O-(beta-D-glucosyl)-trans-4-coumarate + UDP + H(+). The enzyme catalyses (E)-coniferol + UDP-alpha-D-glucose = 4-O-(beta-D-glucosyl)-(E)-coniferol + UDP + H(+). It carries out the reaction (E)-sinapyl alcohol + UDP-alpha-D-glucose = 4-O-(beta-D-glucosyl)-trans-4-sinapoyl alcohol + UDP + H(+). It catalyses the reaction (E)-sinapate + UDP-alpha-D-glucose = 4-O-(beta-D-glucosyl)-trans-sinapate + UDP + H(+). The catalysed reaction is (E)-coniferaldehyde + UDP-alpha-D-glucose = 4-O-(beta-D-glucosyl)-4-(E)-coniferyl aldehyde + UDP + H(+). The enzyme catalyses (E)-sinapaldehyde + UDP-alpha-D-glucose = 4-O-(beta-D-glucosyl)-4-trans-sinapoyl aldehyde + UDP + H(+). In terms of biological role, involved in the O-glucosylation of monolignols (alcohol monomers of lignin). Glucosylates coniferyl alcohol to form coniferyl alcohol 4-O-glucoside. Glucosylates sinapyl alcohol to form sinapyl alcohol 4-O-glucoside. Glucosylates coniferyl aldehyde to form coniferyl aldehyde 4-O-glucoside. Glucosylates sinapyl aldehyde to form sinapyl aldehyde 4-O-glucoside. Possesses low activity with sinapate and ferulate as substrates. In Arabidopsis thaliana (Mouse-ear cress), this protein is UDP-glycosyltransferase 72E2.